The chain runs to 94 residues: Co-chaperonin GroES (94 aa).

This sequence belongs to the GroES chaperonin family. Heptamer of 7 subunits arranged in a ring. Interacts with the chaperonin GroEL.

It localises to the cytoplasm. Together with the chaperonin GroEL, plays an essential role in assisting protein folding. The GroEL-GroES system forms a nano-cage that allows encapsulation of the non-native substrate proteins and provides a physical environment optimized to promote and accelerate protein folding. GroES binds to the apical surface of the GroEL ring, thereby capping the opening of the GroEL channel. The protein is Co-chaperonin GroES of Streptococcus pneumoniae (strain 70585).